The sequence spans 829 residues: Transmembrane protease serine 7 (829 aa).

The Cytoplasmic segment spans residues 1-62; it reads MDKEKSDPSC…RAPFWNVQNK (62 aa). Residues 26–52 are disordered; that stretch reads SVPGKLPGRRPPRKPIGKPRPRKQPKK. Basic residues predominate over residues 32–52; it reads PGRRPPRKPIGKPRPRKQPKK. Residues 63 to 83 traverse the membrane as a helical; Signal-anchor for type II membrane protein segment; it reads IILFTVFLFILAVTAWTLLWL. The Extracellular portion of the chain corresponds to 84-829; the sequence is YISKTESKDA…WIHKYVPSLL (746 aa). One can recognise an SEA domain in the interval 92–220; that stretch reads DAFYFVGMFR…DSVVLNAGLR (129 aa). 3 disulfide bridges follow: Cys233–Cys259, Cys285–Cys308, and Cys351–Cys382. CUB domains follow at residues 233-346 and 351-467; these read CSRY…FEVI and CEST…YNIS. Asn401 and Asn465 each carry an N-linked (GlcNAc...) asparagine glycan. LDL-receptor class A domains follow at residues 469-505, 503-540, and 544-581; these read PCPAGSFRCSSGLCVPQAQRCDGVNDCFDESDELFCV, FCVTVKPACNSSSFRQHGPLVCDGFRDCEDGQDEQNCT, and PCTSRTFKCGNDICFRKQNAQCDGIVDCPDGSDEEGCG. 9 disulfide bridges follow: Cys470–Cys482, Cys477–Cys495, Cys489–Cys504, Cys511–Cys530, Cys524–Cys539, Cys545–Cys557, Cys552–Cys571, Cys565–Cys580, and Cys617–Cys633. A Peptidase S1 domain is found at 592–826; sequence IVGGSDSQEG…FVPWIHKYVP (235 aa). Residues His632 and Asp680 each act as charge relay system in the active site. Cystine bridges form between Cys716–Cys782, Cys748–Cys761, and Cys772–Cys802. The active-site Charge relay system is Ser776.

The protein belongs to the peptidase S1 family. As to quaternary structure, forms a heterodimer with SERPINA5. In terms of processing, N-glycosylated. In terms of tissue distribution, expressed in brain, eye, testis, skin, epididymis and salivary gland with lower levels in heart, skeletal muscle, thymus, ovary, prostate and uterus.

It localises to the cell membrane. In terms of biological role, serine protease which preferentially hydrolyzes peptides with Arg at the P1 position. The chain is Transmembrane protease serine 7 (Tmprss7) from Mus musculus (Mouse).